Consider the following 773-residue polypeptide: Probable dipeptidyl peptidase 4 (773 aa).

The first 18 residues, 1 to 18, serve as a signal peptide directing secretion; sequence MKLSVLSVLLVSVAQAAA. Residues asparagine 37, asparagine 80, asparagine 112, asparagine 220, asparagine 471, and asparagine 496 are each glycosylated (N-linked (GlcNAc...) asparagine). Serine 619 (charge relay system) is an active-site residue. Asparagine 671 carries an N-linked (GlcNAc...) asparagine glycan. Catalysis depends on charge relay system residues aspartate 696 and histidine 731.

This sequence belongs to the peptidase S9B family.

Its subcellular location is the secreted. The catalysed reaction is Release of an N-terminal dipeptide, Xaa-Yaa-|-Zaa-, from a polypeptide, preferentially when Yaa is Pro, provided Zaa is neither Pro nor hydroxyproline.. Its function is as follows. Extracellular dipeptidyl-peptidase which removes N-terminal dipeptides sequentially from polypeptides having unsubstituted N-termini provided that the penultimate residue is proline. The chain is Probable dipeptidyl peptidase 4 (dpp4) from Emericella nidulans (strain FGSC A4 / ATCC 38163 / CBS 112.46 / NRRL 194 / M139) (Aspergillus nidulans).